The following is a 448-amino-acid chain: Probable glycine dehydrogenase (decarboxylating) subunit 1 (448 aa).

It belongs to the GcvP family. N-terminal subunit subfamily. As to quaternary structure, the glycine cleavage system is composed of four proteins: P, T, L and H. In this organism, the P 'protein' is a heterodimer of two subunits.

The catalysed reaction is N(6)-[(R)-lipoyl]-L-lysyl-[glycine-cleavage complex H protein] + glycine + H(+) = N(6)-[(R)-S(8)-aminomethyldihydrolipoyl]-L-lysyl-[glycine-cleavage complex H protein] + CO2. In terms of biological role, the glycine cleavage system catalyzes the degradation of glycine. The P protein binds the alpha-amino group of glycine through its pyridoxal phosphate cofactor; CO(2) is released and the remaining methylamine moiety is then transferred to the lipoamide cofactor of the H protein. This chain is Probable glycine dehydrogenase (decarboxylating) subunit 1, found in Bacillus velezensis (strain DSM 23117 / BGSC 10A6 / LMG 26770 / FZB42) (Bacillus amyloliquefaciens subsp. plantarum).